The following is a 232-amino-acid chain: Glycerol-3-phosphate acyltransferase 4 (232 aa).

6 helical membrane-spanning segments follow: residues 4 to 24 (VFLI…AYLL), 54 to 76 (LGLA…AGWL), 80 to 99 (LWQQ…WPVF), 107 to 127 (GIAT…LIAL), 143 to 163 (VFLG…FFGV), and 168 to 188 (TVTW…LMAP).

Belongs to the PlsY family. Probably interacts with PlsX.

It localises to the cell membrane. It carries out the reaction an acyl phosphate + sn-glycerol 3-phosphate = a 1-acyl-sn-glycero-3-phosphate + phosphate. The protein operates within lipid metabolism; phospholipid metabolism. Functionally, catalyzes the transfer of an acyl group from acyl-phosphate (acyl-PO(4)) to glycerol-3-phosphate (G3P) to form lysophosphatidic acid (LPA). This enzyme utilizes acyl-phosphate as fatty acyl donor, but not acyl-CoA or acyl-ACP. This is Glycerol-3-phosphate acyltransferase 4 from Dehalococcoides mccartyi (strain CBDB1).